Reading from the N-terminus, the 389-residue chain is Alkanesulfonate monooxygenase (389 aa).

It belongs to the SsuD family.

It catalyses the reaction an alkanesulfonate + FMNH2 + O2 = an aldehyde + FMN + sulfite + H2O + 2 H(+). In terms of biological role, catalyzes the desulfonation of aliphatic sulfonates. This is Alkanesulfonate monooxygenase from Rhizobium etli (strain CIAT 652).